Consider the following 536-residue polypeptide: MSKEIRYGKDAKQSLLKGVDLLANTVKITLGPKGRNVVLDKGYGSPLITNDGVSIAKEIELKDPYENMGAKLLYEVASKTNDVAGDGTTTATLLAQSIIHKGFKAVDNGANPVLVREGILRAGKEVSQKLLEKSRPVETSEDIENVASISASSREIGKIIAEAMDKVSKNGVISVDESKGFETELEVVEGMQYDKGYISPYFVSDRETMTVELENPHVLVTDQKISTIQDILPILEQVVKANKPLLIIADDIENEVTSTLILNKLRGTFNVVATKAPGFGDNQKDMLNDIAILTGATFYAKDLQMKLQEIKLEDLGLVQKAVVKKDTTTLIGGHGTKDAIDKRILEIEAQINSSTSDYDKKRLQERLAKLAGGVAIIKVGAATEAELKEKKLRIEDALNATKAAILEGIVAGGGSVLVDIQTELKETLKDSHIDIYKGILAVLDSLSEPLYQIAENAGFDGQDILTEQRKQNKNYGFDAKEGKWVNMLKEGIIDPTKVTRNAILNASSIGALMITSEAAVVEIKDKDQNIPTQPMY.

ATP contacts are provided by residues 29–32, 86–90, glycine 413, and aspartate 494; these read TLGP and DGTTT.

This sequence belongs to the chaperonin (HSP60) family. As to quaternary structure, forms a cylinder of 14 subunits composed of two heptameric rings stacked back-to-back. Interacts with the co-chaperonin GroES.

Its subcellular location is the cytoplasm. The enzyme catalyses ATP + H2O + a folded polypeptide = ADP + phosphate + an unfolded polypeptide.. Its function is as follows. Together with its co-chaperonin GroES, plays an essential role in assisting protein folding. The GroEL-GroES system forms a nano-cage that allows encapsulation of the non-native substrate proteins and provides a physical environment optimized to promote and accelerate protein folding. In Acholeplasma laidlawii (strain PG-8A), this protein is Chaperonin GroEL.